The following is a 109-amino-acid chain: U3-lycotoxin-Ls1x (109 aa).

An N-terminal signal peptide occupies residues 1-20 (MKFVLLFGVLLVTLFSYSSA). Residues 21–44 (EMLDDFDQADEDELLSLIEKEEAR) constitute a propeptide that is removed on maturation. Disulfide bonds link cysteine 48/cysteine 63, cysteine 55/cysteine 72, cysteine 62/cysteine 88, and cysteine 74/cysteine 86.

It belongs to the neurotoxin 19 (CSTX) family. 01 subfamily. As to expression, expressed by the venom gland.

Its subcellular location is the secreted. This Lycosa singoriensis (Wolf spider) protein is U3-lycotoxin-Ls1x.